Here is a 951-residue protein sequence, read N- to C-terminus: Bromodomain-containing protein 8 (951 aa).

An N6-acetyllysine modification is found at Lys85. The stretch at 97–171 (VRKLTAERVE…ATDAAYQARQ (75 aa)) forms a coiled coil. The tract at residues 161-273 (KATDAAYQAR…TPPPSPLLSE (113 aa)) is disordered. Residues 204–226 (TPTTMEEATSGVTPGTLPSTPVT) are compositionally biased toward polar residues. 2 positions are modified to phosphoserine: Ser456 and Ser460. A disordered region spans residues 520–547 (EENDDPQSLPGPWEHPIQQERDKPVPLP). A Glycyl lysine isopeptide (Lys-Gly) (interchain with G-Cter in SUMO2) cross-link involves residue Lys542. Lys554 carries the N6-acetyllysine; alternate modification. Lys554 participates in a covalent cross-link: Glycyl lysine isopeptide (Lys-Gly) (interchain with G-Cter in SUMO1); alternate. Residue Lys554 forms a Glycyl lysine isopeptide (Lys-Gly) (interchain with G-Cter in SUMO2); alternate linkage. Residue Lys582 forms a Glycyl lysine isopeptide (Lys-Gly) (interchain with G-Cter in SUMO2) linkage. The tract at residues 584-745 (EPTEPEPGMS…PVSESDDGFS (162 aa)) is disordered. Over residues 610-622 (PELRSQDSDEEPR) the composition is skewed to basic and acidic residues. Lys648 participates in a covalent cross-link: Glycyl lysine isopeptide (Lys-Gly) (interchain with G-Cter in SUMO2). Residue Ser652 is modified to Phosphoserine. The span at 673–688 (ETQHKFEMSDSLKEES) shows a compositional bias: basic and acidic residues. A Glycyl lysine isopeptide (Lys-Gly) (interchain with G-Cter in SUMO2) cross-link involves residue Lys685. A phosphoserine mark is found at Ser694, Ser710, and Ser714. Residues 779-884 (IQAQKIWKKA…RDVLEQIQQF (106 aa)) enclose the Bromo domain. The segment at 900-922 (AKSLRGRDSTRKQDASEKDSVPM) is disordered. Residues 904–919 (RGRDSTRKQDASEKDS) are compositionally biased toward basic and acidic residues.

Component of the NuA4 histone acetyltransferase complex which contains the catalytic subunit KAT5/TIP60 and the subunits EP400, TRRAP/PAF400, BRD8/SMAP, EPC1, DMAP1/DNMAP1, RUVBL1/TIP49, RUVBL2, ING3, actin, ACTL6A/BAF53A, MORF4L1/MRG15, MORF4L2/MRGX, MRGBP, YEATS4/GAS41, VPS72/YL1 and MEAF6. Component of a NuA4-related complex which contains EP400, TRRAP/PAF400, SRCAP, BRD8/SMAP, EPC1, DMAP1/DNMAP1, RUVBL1/TIP49, RUVBL2, actin, ACTL6A/BAF53A, VPS72 and YEATS4/GAS41. BRD8 isoform 2 interacts with RXRA/NR2B1 and THRB/ERBA2. Component of a SWR1-like complex.

The protein localises to the nucleus. May act as a coactivator during transcriptional activation by hormone-activated nuclear receptors (NR). Stimulates transcriptional activation by AR/DHTR, ESR1/NR3A1, RXRA/NR2B1 and THRB/ERBA2. Component of the NuA4 histone acetyltransferase (HAT) complex which is involved in transcriptional activation of select genes principally by acetylation of nucleosomal histones H4 and H2A. This modification may both alter nucleosome - DNA interactions and promote interaction of the modified histones with other proteins which positively regulate transcription. This complex may be required for the activation of transcriptional programs associated with oncogene and proto-oncogene mediated growth induction, tumor suppressor mediated growth arrest and replicative senescence, apoptosis, and DNA repair. NuA4 may also play a direct role in DNA repair when recruited to sites of DNA damage. Component of a SWR1-like complex that specifically mediates the removal of histone H2A.Z/H2AZ1 from the nucleosome. The polypeptide is Bromodomain-containing protein 8 (Brd8) (Mus musculus (Mouse)).